Consider the following 582-residue polypeptide: Kelch-like protein diablo (582 aa).

The interval 1 to 22 (MGDVLISDRPPSPARLSHTSEK) is disordered. The 68-residue stretch at 41–108 (CDVVINVSGR…CYTSHIVVEE (68 aa)) folds into the BTB domain. Residues 143–245 (CLGIRAFADT…SPKFLVGTVG (103 aa)) form the BACK domain. Kelch repeat units follow at residues 292 to 338 (VLFA…VLND), 340 to 386 (LYAV…VLDG), 387 to 433 (FLYA…VLGG), 435 to 480 (LYAI…VFNN), 482 to 527 (IYAV…VVNG), and 528 to 574 (QLYA…VMRA).

It functions in the pathway protein modification; protein ubiquitination. Functionally, probable substrate-specific adapter of an E3 ubiquitin-protein ligase complex which mediates the ubiquitination and subsequent proteasomal degradation of target proteins. May have a role in synapse differentiation and growth. The sequence is that of Kelch-like protein diablo from Culex quinquefasciatus (Southern house mosquito).